A 228-amino-acid chain; its full sequence is Interferon-induced transmembrane protein 10 (228 aa).

At 1-154 the chain is on the extracellular side; it reads MREGKRGPPC…PDTTEVNDYY (154 aa). A disordered region spans residues 29–49; it reads AQGPGQCPAPLGDPASTTDGA. A helical transmembrane segment spans residues 155 to 175; the sequence is LWSIFNFVYLNFCCLGFIALA. S-palmitoyl cysteine attachment occurs at residues Cys167 and Cys168. The Cytoplasmic segment spans residues 176-200; sequence YSLKVRDKKLLNDLNGAVEDAKTAR. A helical membrane pass occupies residues 201–221; sequence LFNITSSALAASCIILVFIFL. The Extracellular segment spans residues 222–228; the sequence is RYPLTDY.

The protein belongs to the CD225/Dispanin family.

It localises to the cell membrane. The protein is Interferon-induced transmembrane protein 10 (IFITM10) of Homo sapiens (Human).